Here is a 555-residue protein sequence, read N- to C-terminus: Formate--tetrahydrofolate ligase (555 aa).

Position 65–72 (65–72) interacts with ATP; it reads TPAGEGKS.

This sequence belongs to the formate--tetrahydrofolate ligase family.

The catalysed reaction is (6S)-5,6,7,8-tetrahydrofolate + formate + ATP = (6R)-10-formyltetrahydrofolate + ADP + phosphate. Its pathway is one-carbon metabolism; tetrahydrofolate interconversion. The polypeptide is Formate--tetrahydrofolate ligase (Staphylococcus aureus (strain NCTC 8325 / PS 47)).